A 594-amino-acid chain; its full sequence is Lysine--tRNA ligase cla4 (594 aa).

The interval 1–62 (MADPGAVKET…KETSSEQDEA (62 aa)) is disordered. Residues 18–42 (TGEKVSKTELKKRLKSRAKEAEKQK) are compositionally biased toward basic and acidic residues.

It belongs to the class-II aminoacyl-tRNA synthetase family. In terms of assembly, homodimer.

It catalyses the reaction tRNA(Lys) + L-lysine + ATP = L-lysyl-tRNA(Lys) + AMP + diphosphate. Its function is as follows. Involved in self-resistance to cladosporin since this product is an inhibitor of lysyl-tRNA synthetase. Cla4 may not be inhibited by cladosporin, thereby imparting cladosporin resistance. When cladosporin biosynthesis is switched on, transcription of cla4 will then be necessary for continued protein synthesis in C.cladosporioides. This Cladosporium cladosporioides protein is Lysine--tRNA ligase cla4.